The chain runs to 205 residues: Probable nicotinate-nucleotide adenylyltransferase (205 aa).

This sequence belongs to the NadD family.

The catalysed reaction is nicotinate beta-D-ribonucleotide + ATP + H(+) = deamido-NAD(+) + diphosphate. It functions in the pathway cofactor biosynthesis; NAD(+) biosynthesis; deamido-NAD(+) from nicotinate D-ribonucleotide: step 1/1. In terms of biological role, catalyzes the reversible adenylation of nicotinate mononucleotide (NaMN) to nicotinic acid adenine dinucleotide (NaAD). The polypeptide is Probable nicotinate-nucleotide adenylyltransferase (Nocardioides sp. (strain ATCC BAA-499 / JS614)).